A 1178-amino-acid polypeptide reads, in one-letter code: DNA-directed RNA polymerase subunit beta' (1178 aa).

Zn(2+) contacts are provided by Cys60, Cys62, Cys75, and Cys78. 3 residues coordinate Mg(2+): Asp450, Asp452, and Asp454. 4 residues coordinate Zn(2+): Cys795, Cys869, Cys876, and Cys879.

Belongs to the RNA polymerase beta' chain family. In terms of assembly, the RNAP catalytic core consists of 2 alpha, 1 beta, 1 beta' and 1 omega subunit. When a sigma factor is associated with the core the holoenzyme is formed, which can initiate transcription. Mg(2+) is required as a cofactor. The cofactor is Zn(2+).

The enzyme catalyses RNA(n) + a ribonucleoside 5'-triphosphate = RNA(n+1) + diphosphate. Functionally, DNA-dependent RNA polymerase catalyzes the transcription of DNA into RNA using the four ribonucleoside triphosphates as substrates. The chain is DNA-directed RNA polymerase subunit beta' from Clostridium botulinum (strain Okra / Type B1).